Consider the following 144-residue polypeptide: Large ribosomal subunit protein uL11 (144 aa).

Belongs to the universal ribosomal protein uL11 family. As to quaternary structure, part of the ribosomal stalk of the 50S ribosomal subunit. Interacts with L10 and the large rRNA to form the base of the stalk. L10 forms an elongated spine to which L12 dimers bind in a sequential fashion forming a multimeric L10(L12)X complex. One or more lysine residues are methylated.

Its function is as follows. Forms part of the ribosomal stalk which helps the ribosome interact with GTP-bound translation factors. This chain is Large ribosomal subunit protein uL11, found in Rhodococcus opacus (strain B4).